A 395-amino-acid polypeptide reads, in one-letter code: Probable FMNH2-dependent monooxygenase SfnC (395 aa).

Its function is as follows. Involved in the dimethyl sulfide degradation pathway. This chain is Probable FMNH2-dependent monooxygenase SfnC, found in Pseudomonas putida (Arthrobacter siderocapsulatus).